Reading from the N-terminus, the 349-residue chain is Interferon-stimulated 20 kDa exonuclease-like 2 (349 aa).

Disordered regions lie at residues 1 to 100 and 126 to 166; these read MSTL…AAVP and ALPK…KYSG. Residues 14 to 23 show a composition bias toward basic and acidic residues; sequence PPKKALEGNA. Over residues 24–47 the composition is skewed to basic residues; that stretch reads KHRKFVKKRRLLERKGFLNKKKQP. Over residues 54–66 the composition is skewed to basic and acidic residues; the sequence is LHSEPSQKGETPR. The segment covering 70–87 has biased composition (low complexity); it reads TWKATPLPKKKTTAASSS. Residues 130–142 are compositionally biased toward basic residues; sequence IKSHPTRPQKKGS. Residues 175–331 enclose the Exonuclease domain; sequence MVAIDCEMVG…EDAQATMELY (157 aa).

Its subcellular location is the nucleus. The protein resides in the nucleolus. Its function is as follows. 3'-&gt; 5'-exoribonuclease involved in ribosome biogenesis in the processing of the 12S pre-rRNA. Displays a strong specificity for a 3'-end containing a free hydroxyl group. The protein is Interferon-stimulated 20 kDa exonuclease-like 2 (ISG20L2) of Bos taurus (Bovine).